Consider the following 545-residue polypeptide: Glucose-6-phosphate isomerase (545 aa).

The active-site Proton donor is the E351. Catalysis depends on residues H382 and K510.

The protein belongs to the GPI family.

It localises to the cytoplasm. The enzyme catalyses alpha-D-glucose 6-phosphate = beta-D-fructose 6-phosphate. It functions in the pathway carbohydrate biosynthesis; gluconeogenesis. The protein operates within carbohydrate degradation; glycolysis; D-glyceraldehyde 3-phosphate and glycerone phosphate from D-glucose: step 2/4. In terms of biological role, catalyzes the reversible isomerization of glucose-6-phosphate to fructose-6-phosphate. This chain is Glucose-6-phosphate isomerase, found in Helicobacter pylori (strain G27).